Consider the following 249-residue polypeptide: Undecaprenyl-diphosphatase (249 aa).

A run of 8 helical transmembrane segments spans residues G11–F31, P35–V55, L80–S100, V101–L121, I135–I155, A175–L195, A202–V222, and V226–L246.

The protein belongs to the UppP family.

The protein localises to the cell membrane. It carries out the reaction di-trans,octa-cis-undecaprenyl diphosphate + H2O = di-trans,octa-cis-undecaprenyl phosphate + phosphate + H(+). Functionally, catalyzes the dephosphorylation of undecaprenyl diphosphate (UPP). This chain is Undecaprenyl-diphosphatase, found in Methanococcus maripaludis (strain C5 / ATCC BAA-1333).